Reading from the N-terminus, the 451-residue chain is tRNA-2-methylthio-N(6)-dimethylallyladenosine synthase (451 aa).

The 117-residue stretch at 18–134 (ARVYLETYGC…LPNLLDLAES (117 aa)) folds into the MTTase N-terminal domain. 6 residues coordinate [4Fe-4S] cluster: Cys27, Cys63, Cys97, Cys170, Cys174, and Cys177. The Radical SAM core domain maps to 156–386 (RKNGHSAFLA…IALQQKISAE (231 aa)). A TRAM domain is found at 389-451 (RNDIGNTHEV…TSATLIGNAL (63 aa)).

Belongs to the methylthiotransferase family. MiaB subfamily. As to quaternary structure, monomer. Requires [4Fe-4S] cluster as cofactor.

The protein localises to the cytoplasm. The catalysed reaction is N(6)-dimethylallyladenosine(37) in tRNA + (sulfur carrier)-SH + AH2 + 2 S-adenosyl-L-methionine = 2-methylsulfanyl-N(6)-dimethylallyladenosine(37) in tRNA + (sulfur carrier)-H + 5'-deoxyadenosine + L-methionine + A + S-adenosyl-L-homocysteine + 2 H(+). Catalyzes the methylthiolation of N6-(dimethylallyl)adenosine (i(6)A), leading to the formation of 2-methylthio-N6-(dimethylallyl)adenosine (ms(2)i(6)A) at position 37 in tRNAs that read codons beginning with uridine. This chain is tRNA-2-methylthio-N(6)-dimethylallyladenosine synthase, found in Chloroherpeton thalassium (strain ATCC 35110 / GB-78).